We begin with the raw amino-acid sequence, 125 residues long: Small ribosomal subunit protein uS13 (125 aa).

The interval 92-125 (RRSLPVRGQNTQTNARTRKGKRKTVAGKKKAARK) is disordered. A compositionally biased stretch (basic residues) spans 107-125 (RTRKGKRKTVAGKKKAARK).

Belongs to the universal ribosomal protein uS13 family. Part of the 30S ribosomal subunit. Forms a loose heterodimer with protein S19. Forms two bridges to the 50S subunit in the 70S ribosome.

In terms of biological role, located at the top of the head of the 30S subunit, it contacts several helices of the 16S rRNA. In the 70S ribosome it contacts the 23S rRNA (bridge B1a) and protein L5 of the 50S subunit (bridge B1b), connecting the 2 subunits; these bridges are implicated in subunit movement. Contacts the tRNAs in the A and P-sites. In Chlorobium luteolum (strain DSM 273 / BCRC 81028 / 2530) (Pelodictyon luteolum), this protein is Small ribosomal subunit protein uS13.